The following is a 397-amino-acid chain: L-asparaginase-like protein GM15681 (397 aa).

An N-terminal signal peptide occupies residues 1 to 22; it reads MLAQSCCLRLLILLLLFTSICS. 3 cysteine pairs are disulfide-bonded: Cys90–Cys95, Cys189–Cys205, and Cys344–Cys371.

Belongs to the Ntn-hydrolase family.

This Drosophila sechellia (Fruit fly) protein is L-asparaginase-like protein GM15681.